The following is a 365-amino-acid chain: Histidinol-phosphate aminotransferase (365 aa).

Lysine 223 is subject to N6-(pyridoxal phosphate)lysine.

Belongs to the class-II pyridoxal-phosphate-dependent aminotransferase family. Histidinol-phosphate aminotransferase subfamily. As to quaternary structure, homodimer. It depends on pyridoxal 5'-phosphate as a cofactor.

The enzyme catalyses L-histidinol phosphate + 2-oxoglutarate = 3-(imidazol-4-yl)-2-oxopropyl phosphate + L-glutamate. Its pathway is amino-acid biosynthesis; L-histidine biosynthesis; L-histidine from 5-phospho-alpha-D-ribose 1-diphosphate: step 7/9. This chain is Histidinol-phosphate aminotransferase, found in Brucella melitensis biotype 1 (strain ATCC 23456 / CCUG 17765 / NCTC 10094 / 16M).